A 566-amino-acid chain; its full sequence is Bicarbonate transporter BicA (566 aa).

Residues 1-15 (MQITNKIHFRNIRGD) lie on the Cytoplasmic side of the membrane. Residues 16–36 (IFGGLTAAVIALPMALAFGVA) traverse the membrane as a helical segment. Residues 37 to 42 (SGAGAE) are Periplasmic-facing. The helical transmembrane segment at 43–63 (AGLWGAVLVGFFAALFGGTPT) threads the bilayer. Leu-64 is a topological domain (cytoplasmic). Residues 65 to 85 (ISEPTGPMTVVMTAVIAHFTA) traverse the membrane as a helical segment. A hydrogencarbonate-binding site is contributed by Thr-69. Residues 86-93 (SAATPEEG) are Periplasmic-facing. The helical transmembrane segment at 94–114 (LAIAFTVVMMAGVFQIIFGSL) threads the bilayer. Residues 115–126 (KLGKYVTMMPYT) lie on the Cytoplasmic side of the membrane. The chain crosses the membrane as a helical span at residues 127 to 147 (VISGFMSGIGIILVILQLAPF). Topologically, residues 148–169 (LGQASPGGGVIGTLQNLPTLLS) are periplasmic. Residues 170–190 (NIQPGETALALGTVAIIWFMP) traverse the membrane as a helical segment. Over 191-196 (EKFKKV) the chain is Cytoplasmic. A helical membrane pass occupies residues 197–217 (IPPQLVALVLGTVIAFFVFPP). Over 218–247 (EVSDLRRIGEIRAGFPELVRPSFSPVEFQR) the chain is Periplasmic. A helical transmembrane segment spans residues 248–268 (MILDAAVLGMLGCIDALLTSV). Na(+)-binding residues include Asp-262, Thr-266, and Gly-304. The Cytoplasmic segment spans residues 269–318 (VADSLTRTEHNSNKELIGQGLGNLFSGLFGGIAGAGATMGTVVNIQSGGR). Ala-305 provides a ligand contact to hydrogencarbonate. Thr-306 lines the Na(+) pocket. Residues 319-339 (TALSGLVRAFVLLVVILGAAS) form a helical membrane-spanning segment. Residue Leu-340 is a topological domain, periplasmic. Residues 341–361 (TATIPLAVLAGIAFKVGVDII) form a helical membrane-spanning segment. Residues 362–371 (DWSFLKRAHE) lie on the Cytoplasmic side of the membrane. Residues 372 to 392 (ISPKGALIMYGVILLTVLVDL) traverse the membrane as a helical segment. Residue Ile-393 is a topological domain, periplasmic. Residues 394-414 (VAVGVGVFVANVLTIERMSNL) form a helical membrane-spanning segment. Over 415-566 (QSEKVQTVSD…GVTAPSSEMG (152 aa)) the chain is Cytoplasmic. Residues 436–546 (KRWLDEGQGR…MSREEALKNA (111 aa)) form the STAS domain.

This sequence belongs to the SLC26A/SulP transporter (TC 2.A.53) family.

It is found in the cell inner membrane. Low/medium affinity, Na(+)-dependent bicarbonate transporter. In Picosynechococcus sp. (strain ATCC 27264 / PCC 7002 / PR-6) (Agmenellum quadruplicatum), this protein is Bicarbonate transporter BicA (bicA).